The sequence spans 123 residues: Signal recognition particle 14 kDa protein (123 aa).

Positions 99–123 are disordered; that stretch reads KKKPTPTTTPSSSTTAKTAAKKTKV. A compositionally biased stretch (low complexity) spans 103–116; that stretch reads TPTTTPSSSTTAKT.

The protein belongs to the SRP14 family. In terms of assembly, heterodimer with srp9; binds RNA as heterodimer. Component of a signal recognition particle (SRP) complex that consists of a 7SL RNA molecule and six protein subunits: srp72, srp68, srp54, srp19, srp14 and srp9.

It is found in the cytoplasm. Functionally, component of the signal recognition particle (SRP) complex, a ribonucleoprotein complex that mediates the cotranslational targeting of secretory and membrane proteins to the endoplasmic reticulum (ER). Srp9 together with srp14 and the Alu portion of the SRP RNA, constitutes the elongation arrest domain of SRP. The complex of srp9 and srp14 is required for SRP RNA binding. This chain is Signal recognition particle 14 kDa protein (srp14-1), found in Dictyostelium discoideum (Social amoeba).